A 177-amino-acid polypeptide reads, in one-letter code: ATP synthase subunit delta (177 aa).

It belongs to the ATPase delta chain family. As to quaternary structure, F-type ATPases have 2 components, F(1) - the catalytic core - and F(0) - the membrane proton channel. F(1) has five subunits: alpha(3), beta(3), gamma(1), delta(1), epsilon(1). F(0) has three main subunits: a(1), b(2) and c(10-14). The alpha and beta chains form an alternating ring which encloses part of the gamma chain. F(1) is attached to F(0) by a central stalk formed by the gamma and epsilon chains, while a peripheral stalk is formed by the delta and b chains.

Its subcellular location is the cell inner membrane. Its function is as follows. F(1)F(0) ATP synthase produces ATP from ADP in the presence of a proton or sodium gradient. F-type ATPases consist of two structural domains, F(1) containing the extramembraneous catalytic core and F(0) containing the membrane proton channel, linked together by a central stalk and a peripheral stalk. During catalysis, ATP synthesis in the catalytic domain of F(1) is coupled via a rotary mechanism of the central stalk subunits to proton translocation. In terms of biological role, this protein is part of the stalk that links CF(0) to CF(1). It either transmits conformational changes from CF(0) to CF(1) or is implicated in proton conduction. The polypeptide is ATP synthase subunit delta (Herminiimonas arsenicoxydans).